Reading from the N-terminus, the 671-residue chain is DNA ligase (671 aa).

Residues 36–40, 85–86, and glutamate 115 each bind NAD(+); these read DHVYD and SM. The active-site N6-AMP-lysine intermediate is the lysine 117. Arginine 138, glutamate 172, lysine 287, and lysine 311 together coordinate NAD(+). The Zn(2+) site is built by cysteine 405, cysteine 408, cysteine 423, and cysteine 428. The region spanning 588 to 671 is the BRCT domain; the sequence is AADNFFKGKT…SKIEEKDTEK (84 aa).

Belongs to the NAD-dependent DNA ligase family. LigA subfamily. The cofactor is Mg(2+). Mn(2+) serves as cofactor.

It catalyses the reaction NAD(+) + (deoxyribonucleotide)n-3'-hydroxyl + 5'-phospho-(deoxyribonucleotide)m = (deoxyribonucleotide)n+m + AMP + beta-nicotinamide D-nucleotide.. DNA ligase that catalyzes the formation of phosphodiester linkages between 5'-phosphoryl and 3'-hydroxyl groups in double-stranded DNA using NAD as a coenzyme and as the energy source for the reaction. It is essential for DNA replication and repair of damaged DNA. The sequence is that of DNA ligase from Lactobacillus delbrueckii subsp. bulgaricus (strain ATCC 11842 / DSM 20081 / BCRC 10696 / JCM 1002 / NBRC 13953 / NCIMB 11778 / NCTC 12712 / WDCM 00102 / Lb 14).